A 471-amino-acid chain; its full sequence is 3-isopropylmalate dehydratase large subunit (471 aa).

[4Fe-4S] cluster is bound by residues Cys-351, Cys-412, and Cys-415.

The protein belongs to the aconitase/IPM isomerase family. LeuC type 1 subfamily. In terms of assembly, heterodimer of LeuC and LeuD. It depends on [4Fe-4S] cluster as a cofactor.

It carries out the reaction (2R,3S)-3-isopropylmalate = (2S)-2-isopropylmalate. It participates in amino-acid biosynthesis; L-leucine biosynthesis; L-leucine from 3-methyl-2-oxobutanoate: step 2/4. Catalyzes the isomerization between 2-isopropylmalate and 3-isopropylmalate, via the formation of 2-isopropylmaleate. In Hahella chejuensis (strain KCTC 2396), this protein is 3-isopropylmalate dehydratase large subunit.